Consider the following 395-residue polypeptide: S-adenosylmethionine synthase 3 (395 aa).

A Mg(2+)-binding site is contributed by E10. H16 is a binding site for ATP. Residue E44 coordinates K(+). L-methionine is bound by residues E57 and Q100. Residues D168–K170, S236–F239, D247, R253–K254, A270, K274, and K278 contribute to the ATP site. D247 provides a ligand contact to L-methionine. K278 provides a ligand contact to L-methionine.

This sequence belongs to the AdoMet synthase family. As to quaternary structure, homotetramer. It depends on Mn(2+) as a cofactor. The cofactor is Mg(2+). Co(2+) serves as cofactor. K(+) is required as a cofactor.

The protein resides in the cytoplasm. It carries out the reaction L-methionine + ATP + H2O = S-adenosyl-L-methionine + phosphate + diphosphate. The protein operates within amino-acid biosynthesis; S-adenosyl-L-methionine biosynthesis; S-adenosyl-L-methionine from L-methionine: step 1/1. Functionally, catalyzes the formation of S-adenosylmethionine from methionine and ATP. The reaction comprises two steps that are both catalyzed by the same enzyme: formation of S-adenosylmethionine (AdoMet) and triphosphate, and subsequent hydrolysis of the triphosphate. In Populus trichocarpa (Western balsam poplar), this protein is S-adenosylmethionine synthase 3 (METK3).